We begin with the raw amino-acid sequence, 100 residues long: NADH-quinone oxidoreductase subunit K (100 aa).

3 consecutive transmembrane segments (helical) span residues 4–24 (TTWVIILSFLLFAIGTFGLLS), 28–48 (LLFILLSLEIMLNGIILLFIA), and 60–80 (IMYLLVLTLAASEVAVGLALV).

Belongs to the complex I subunit 4L family. As to quaternary structure, NDH-1 is composed of 13 different subunits. Subunits NuoA, H, J, K, L, M, N constitute the membrane sector of the complex.

The protein localises to the cell inner membrane. The catalysed reaction is a quinone + NADH + 5 H(+)(in) = a quinol + NAD(+) + 4 H(+)(out). In terms of biological role, NDH-1 shuttles electrons from NADH, via FMN and iron-sulfur (Fe-S) centers, to quinones in the respiratory chain. The immediate electron acceptor for the enzyme in this species is believed to be ubiquinone. Couples the redox reaction to proton translocation (for every two electrons transferred, four hydrogen ions are translocated across the cytoplasmic membrane), and thus conserves the redox energy in a proton gradient. This is NADH-quinone oxidoreductase subunit K from Shewanella woodyi (strain ATCC 51908 / MS32).